The sequence spans 1202 residues: Calmodulin-binding transcription activator 2 (1202 aa).

The CG-1 DNA-binding region spans 30 to 155 (RCPLLPPERL…YLNVPALEDC (126 aa)). The Nuclear localization signal motif lies at 79-86 (RKKVKYRK). Disordered regions lie at residues 263-322 (SIPH…SRGG), 361-409 (GTEP…AHTP), and 421-491 (PQAA…LFGG). Positions 270–283 (PEPPPLIAPLPPEL) are enriched in pro residues. Composition is skewed to low complexity over residues 289 to 299 (SPSSSSSSSSS) and 313 to 322 (TSRGGSSRGG). Pro residues-rich tracts occupy residues 365 to 374 (SAPPAPPSPA) and 460 to 476 (PPIP…PAPL). The 79-residue stretch at 537–615 (DFSPEWSYPE…LSASVLFEYR (79 aa)) folds into the IPT/TIG domain. ANK repeat units follow at residues 712–745 (MSLL…DLEQ), 757–787 (CTPL…SIPD), and 791–821 (RLPL…SVEP). Disordered stretches follow at residues 817 to 874 (PSVE…ASEM) and 906 to 929 (PLSS…ADSP). Composition is skewed to low complexity over residues 826–846 (SPPS…SELS) and 906–917 (PLSSLPALPPAS). IQ domains follow at residues 1049–1078 (YEAA…AAVI) and 1102–1131 (TQAA…AVLI).

This sequence belongs to the CAMTA family. As to quaternary structure, may interact with calmodulin. In terms of tissue distribution, detected in brain. Expressed at constant levels throughout the cell cycle in neuroblastoma cell lines.

The protein localises to the nucleus. In terms of biological role, transcription activator. May act as tumor suppressor. The polypeptide is Calmodulin-binding transcription activator 2 (CAMTA2) (Homo sapiens (Human)).